The primary structure comprises 511 residues: Caspase-8 (511 aa).

A propeptide spanning residues 1-242 (MSGHNILTQL…MDGNGIANES (242 aa)) is cleaved from the precursor. Residues His-352 and Cys-393 contribute to the active site. Residues 406–415 (KINASTKSPC) constitute a propeptide that is removed on maturation.

Belongs to the peptidase C14A family. As to quaternary structure, heterotetramer that consists of two anti-parallel arranged heterodimers, each one formed by a 15 kDa (caspase-8 subunit p15) and a 10 kDa (caspase-8 subunit p10) subunit. Interacts with the N-terminus of Fadd.

It localises to the cytoplasm. The catalysed reaction is Strict requirement for Asp at position P1 and has a preferred cleavage sequence of (Leu/Asp/Val)-Glu-Thr-Asp-|-(Gly/Ser/Ala).. In terms of biological role, effector of the programmed cell death (PCD) activators rpr, grim and W. May play an apoptotic role in the germline as well as soma. Role in immune response, required to resist Gram-negative bacterial infections by regulating DptA. Fadd interacts with Dredd, Fadd promotes cleavage of Dredd and is necessary and sufficient for enhancing Dredd-induced apoptosis. This is Caspase-8 from Drosophila pseudoobscura pseudoobscura (Fruit fly).